Reading from the N-terminus, the 311-residue chain is Putative protease MJ0651 (311 aa).

The active-site Nucleophile is serine 128. Residue lysine 180 is the Proton donor/acceptor of the active site.

It belongs to the peptidase S49 family.

This is Putative protease MJ0651 from Methanocaldococcus jannaschii (strain ATCC 43067 / DSM 2661 / JAL-1 / JCM 10045 / NBRC 100440) (Methanococcus jannaschii).